We begin with the raw amino-acid sequence, 1526 residues long: DNA topoisomerase 2-alpha (1526 aa).

Position 1 is an N-acetylmethionine (Met-1). Residue Ser-4 is modified to Phosphoserine. Residue Lys-17 forms a Glycyl lysine isopeptide (Lys-Gly) (interchain with G-Cter in SUMO2) linkage. ATP is bound by residues Asn-90, Asn-118, and 146–148; that span reads SSN. Residues Lys-154 and Lys-155 each participate in a glycyl lysine isopeptide (Lys-Gly) (interchain with G-Cter in SUMO2) cross-link. 159 to 166 lines the ATP pocket; it reads GRNGYGAK. Position 280 is a phosphothreonine (Thr-280). The interaction with DNA stretch occupies residues 340–342; that stretch reads KKK. Lys-350 participates in a covalent cross-link: Glycyl lysine isopeptide (Lys-Gly) (interchain with G-Cter in SUMO2). 374–376 is an ATP binding site; sequence QTK. Glycyl lysine isopeptide (Lys-Gly) (interchain with G-Cter in SUMO2) cross-links involve residues Lys-384, Lys-395, Lys-414, Lys-416, Lys-423, and Lys-438. The Toprim domain occupies 453 to 570; it reads CTLILTEGDS…SLLRHRFLEE (118 aa). Mg(2+) is bound at residue Glu-459. Residues Lys-464, Lys-478, and Lys-527 each participate in a glycyl lysine isopeptide (Lys-Gly) (interchain with G-Cter in SUMO2) cross-link. Residues Asp-539 and Asp-541 each contribute to the Mg(2+) site. Residues Lys-582, Lys-597, Lys-612, Lys-620, Lys-623, Lys-630, Lys-637, Lys-653, Lys-660, and Lys-674 each participate in a glycyl lysine isopeptide (Lys-Gly) (interchain with G-Cter in SUMO2) cross-link. The region spanning 713 to 1168 is the Topo IIA-type catalytic domain; that stretch reads IPSMVDGLKP…TPSDLWKEDL (456 aa). Tyr-803 serves as the catalytic O-(5'-phospho-DNA)-tyrosine intermediate. The segment at 988 to 997 is interaction with DNA; sequence KLQTSLTCNS. Residue Lys-1073 forms a Glycyl lysine isopeptide (Lys-Gly) (interchain with G-Cter in SUMO2) linkage. Residues 1087–1096 show a composition bias toward basic and acidic residues; that stretch reads AWKEAQQKVP. The disordered stretch occupies residues 1087-1120; it reads AWKEAQQKVPEEEENEENEESESESTSPAAESGP. Over residues 1097–1109 the composition is skewed to acidic residues; it reads EEEENEENEESES. Residues Lys-1193 and Lys-1201 each participate in a glycyl lysine isopeptide (Lys-Gly) (interchain with G-Cter in SUMO2) cross-link. Phosphoserine is present on Ser-1210. Residues 1229-1526 are disordered; it reads EKKIRRKIKS…YLEESDDDLF (298 aa). Lys-1237 is covalently cross-linked (Glycyl lysine isopeptide (Lys-Gly) (interchain with G-Cter in SUMO1); alternate). Lys-1237 participates in a covalent cross-link: Glycyl lysine isopeptide (Lys-Gly) (interchain with G-Cter in SUMO2); alternate. Thr-1244 is subject to Phosphothreonine. Positions 1254 to 1268 are enriched in basic and acidic residues; sequence LRQRLEKRQKREPGT. Glycyl lysine isopeptide (Lys-Gly) (interchain with G-Cter in SUMO2) cross-links involve residues Lys-1272, Lys-1279, and Lys-1282. Phosphoserine is present on residues Ser-1291, Ser-1293, Ser-1295, and Ser-1298. Residue Thr-1323 is modified to Phosphothreonine. A compositionally biased stretch (acidic residues) spans 1326–1346; sequence LDSDDDFSGLDEKDEDEDFFP. Phosphoserine is present on residues Ser-1328 and Ser-1333. At Thr-1350 the chain carries Phosphothreonine. Residues Lys-1359, Lys-1363, and Lys-1369 each participate in a glycyl lysine isopeptide (Lys-Gly) (interchain with G-Cter in SUMO2) cross-link. Phosphoserine occurs at positions 1370 and 1373. Lys-1381 participates in a covalent cross-link: Glycyl lysine isopeptide (Lys-Gly) (interchain with G-Cter in SUMO2). Phosphoserine occurs at positions 1383 and 1387. Polar residues predominate over residues 1417-1427; that stretch reads TKGQSLTSTAG. Lys-1418 is covalently cross-linked (Glycyl lysine isopeptide (Lys-Gly) (interchain with G-Cter in SUMO2); alternate). Lys-1418 carries the post-translational modification N6-acetyllysine; alternate. An interaction with PLSCR1 region spans residues 1429–1435; that stretch reads KKRAVPK. A Glycyl lysine isopeptide (Lys-Gly) (interchain with G-Cter in SUMO2); alternate cross-link involves residue Lys-1438. Position 1438 is an N6-acetyllysine; alternate (Lys-1438). Residues Lys-1450 and Lys-1455 each participate in a glycyl lysine isopeptide (Lys-Gly) (interchain with G-Cter in SUMO2) cross-link. Phosphoserine is present on residues Ser-1465, Ser-1467, Ser-1470, and Ser-1472. Glycyl lysine isopeptide (Lys-Gly) (interchain with G-Cter in SUMO2) cross-links involve residues Lys-1480 and Lys-1488. Basic and acidic residues predominate over residues 1487–1498; sequence LKGEERDFHVDL. Ser-1521 is modified (phosphoserine).

Belongs to the type II topoisomerase family. Homodimer. Interacts with COPS5. Interacts with RECQL5; this stimulates DNA decatenation. Interacts with SETMAR; stimulates the topoisomerase activity. Interacts with DHX9; this interaction occurs in a E2 enzyme UBE2I- and RNA-dependent manner, negatively regulates DHX9-mediated double-stranded DNA and RNA duplex helicase activity and stimulates TOP2A-mediated supercoiled DNA relaxation activity. Interacts with HNRNPU (via C-terminus); this interaction protects the topoisomerase TOP2A from degradation and positively regulates the relaxation of supercoiled DNA in a RNA-dependent manner. Interacts with MCM3AP. Interacts with ERCC6. Interacts with PLSCR1. Interacts with GCNA; this interaction allows the resolution of topoisomerase II (TOP2A) DNA-protein cross-links. Interacts with POL1RA/RPA1 (via dock II) and UBTF in the context of Pol I complex; may assist Pol I transcription initiation by releasing supercoils occurring during DNA unwinding. Interacts with TPRN; TPRN interacts with a number of DNA damage response proteins, is recruited to sites of DNA damage and may play a role in DNA damage repair. It depends on Mg(2+) as a cofactor. Mn(2+) is required as a cofactor. Requires Ca(2+) as cofactor. Phosphorylation has no effect on catalytic activity.

The protein resides in the cytoplasm. It is found in the nucleus. Its subcellular location is the nucleoplasm. The protein localises to the nucleolus. It carries out the reaction ATP-dependent breakage, passage and rejoining of double-stranded DNA.. In terms of biological role, key decatenating enzyme that alters DNA topology by binding to two double-stranded DNA molecules, generating a double-stranded break in one of the strands, passing the intact strand through the broken strand, and religating the broken strand. May play a role in regulating the period length of BMAL1 transcriptional oscillation. In Rattus norvegicus (Rat), this protein is DNA topoisomerase 2-alpha (Top2a).